The sequence spans 579 residues: Insulin-like growth factor 2 mRNA-binding protein 3 (579 aa).

2 RRM domains span residues 2 to 75 (NKLY…HSVP) and 81 to 156 (RKLQ…YIPD). Positions 160–192 (AQQNPLQQPRGRRGLGQRGSSRQGSPGSVSKQK) are disordered. A compositionally biased stretch (low complexity) spans 177–187 (RGSSRQGSPGS). Ser-184 is subject to Phosphoserine. 3 KH domains span residues 195–260 (DLPL…CKSI), 276–343 (EIPL…EEEI), and 405–470 (TETV…QGRI). Residues Lys-450 and Lys-475 each participate in a glycyl lysine isopeptide (Lys-Gly) (interchain with G-Cter in SUMO2) cross-link. In terms of domain architecture, KH 4 spans 487–553 (KLEAHIRVPS…YACQVAQRKI (67 aa)). Position 528 is a phosphothreonine (Thr-528).

Belongs to the RRM IMP/VICKZ family. In terms of assembly, can form homooligomers and heterooligomers with IGF2BP1 and IGF2BP3 in an RNA-dependent manner. Interacts with IGF2BP1. Interacts with ELAVL1, DHX9, HNRNPU, MATR3 and PABPC1. Expressed in fetal liver, fetal lung, fetal kidney, fetal thymus, fetal placenta, fetal follicles of ovary and gonocytes of testis, growing oocytes, spermatogonia and semen (at protein level). Expressed in cervix adenocarcinoma, in testicular, pancreatic and renal-cell carcinomas (at protein level). Expressed ubiquitously during fetal development at 8 and 14 weeks of gestation. Expressed in ovary, testis, brain, placenta, pancreatic cancer tissues and pancreatic cancer cell lines.

It is found in the nucleus. Its subcellular location is the cytoplasm. It localises to the P-body. The protein resides in the stress granule. RNA-binding factor that may recruit target transcripts to cytoplasmic protein-RNA complexes (mRNPs). This transcript 'caging' into mRNPs allows mRNA transport and transient storage. It also modulates the rate and location at which target transcripts encounter the translational apparatus and shields them from endonuclease attacks or microRNA-mediated degradation. Preferentially binds to N6-methyladenosine (m6A)-containing mRNAs and increases their stability. Binds to the 3'-UTR of CD44 mRNA and stabilizes it, hence promotes cell adhesion and invadopodia formation in cancer cells. Binds to beta-actin/ACTB and MYC transcripts. Increases MYC mRNA stability by binding to the coding region instability determinant (CRD) and binding is enhanced by m6A-modification of the CRD. Binds to the 5'-UTR of the insulin-like growth factor 2 (IGF2) mRNAs. This chain is Insulin-like growth factor 2 mRNA-binding protein 3 (IGF2BP3), found in Homo sapiens (Human).